We begin with the raw amino-acid sequence, 312 residues long: Ribosomal RNA small subunit methyltransferase H (312 aa).

S-adenosyl-L-methionine is bound by residues serine 33–histidine 35, aspartate 53, phenylalanine 80, aspartate 101, and glutamine 108.

This sequence belongs to the methyltransferase superfamily. RsmH family.

The protein localises to the cytoplasm. It catalyses the reaction cytidine(1402) in 16S rRNA + S-adenosyl-L-methionine = N(4)-methylcytidine(1402) in 16S rRNA + S-adenosyl-L-homocysteine + H(+). Its function is as follows. Specifically methylates the N4 position of cytidine in position 1402 (C1402) of 16S rRNA. In Desulforapulum autotrophicum (strain ATCC 43914 / DSM 3382 / VKM B-1955 / HRM2) (Desulfobacterium autotrophicum), this protein is Ribosomal RNA small subunit methyltransferase H.